The following is a 101-amino-acid chain: MIKSELVQRIAEHNPHLYQRDVENIVNAILDEIVAALARGDRVELRGFGAFSVKHRPARAGRNPRTGEHVPVDQKSVPFFKTGKEMRERLNRDNATSEANA.

Positions 57-76 (PARAGRNPRTGEHVPVDQKS) are disordered.

Belongs to the bacterial histone-like protein family. As to quaternary structure, heterodimer of an alpha and a beta chain.

Functionally, this protein is one of the two subunits of integration host factor, a specific DNA-binding protein that functions in genetic recombination as well as in transcriptional and translational control. In Nitrobacter winogradskyi (strain ATCC 25391 / DSM 10237 / CIP 104748 / NCIMB 11846 / Nb-255), this protein is Integration host factor subunit beta.